A 738-amino-acid polypeptide reads, in one-letter code: Alanine--tRNA ligase (738 aa).

Residues histidine 564, histidine 568, cysteine 666, and histidine 670 each coordinate Zn(2+).

This sequence belongs to the class-II aminoacyl-tRNA synthetase family. Homotetramer. Requires Zn(2+) as cofactor.

It localises to the cytoplasm. It carries out the reaction tRNA(Ala) + L-alanine + ATP = L-alanyl-tRNA(Ala) + AMP + diphosphate. In terms of biological role, catalyzes the attachment of alanine to tRNA(Ala) in a two-step reaction: alanine is first activated by ATP to form Ala-AMP and then transferred to the acceptor end of tRNA(Ala). Also edits incorrectly charged Ser-tRNA(Ala) and Gly-tRNA(Ala) via its editing domain. The polypeptide is Alanine--tRNA ligase (alaS) (Yersinia pestis bv. Antiqua (strain Antiqua)).